The sequence spans 131 residues: Lymphocyte antigen 6C1 (131 aa).

An N-terminal signal peptide occupies residues 1–26 (MDTSHTTKSCVLILLVALLCAERAQG). The 89-residue stretch at 27–115 (LQCYECYGVP…PTAGSTWTMA (89 aa)) folds into the UPAR/Ly6 domain. 5 disulfide bridges follow: Cys29–Cys53, Cys32–Cys41, Cys46–Cys74, Cys78–Cys95, and Cys96–Cys101. The GPI-anchor amidated glycine moiety is linked to residue Gly109. Positions 110–131 (STWTMAGVLLFSLSSVVLQTLL) are cleaved as a propeptide — removed in mature form.

It localises to the cell membrane. This chain is Lymphocyte antigen 6C1 (Ly6c1), found in Mus musculus (Mouse).